A 262-amino-acid chain; its full sequence is tRNA (guanine-N(1)-)-methyltransferase (262 aa).

S-adenosyl-L-methionine-binding positions include Gly-111 and 130-135 (LGDFVL).

This sequence belongs to the RNA methyltransferase TrmD family. As to quaternary structure, homodimer.

The protein localises to the cytoplasm. The catalysed reaction is guanosine(37) in tRNA + S-adenosyl-L-methionine = N(1)-methylguanosine(37) in tRNA + S-adenosyl-L-homocysteine + H(+). Its function is as follows. Specifically methylates guanosine-37 in various tRNAs. This Desulfitobacterium hafniense (strain Y51) protein is tRNA (guanine-N(1)-)-methyltransferase.